The primary structure comprises 361 residues: Protein TIFY 8 (361 aa).

Disordered regions lie at residues 53–78 (NKAA…GLSS), 113–134 (RFSG…HPET), 190–232 (QTAA…RKDL), and 268–361 (SGGS…KEAT). The span at 56–78 (AKAAMTPSTASASSAGGLGGLSS) shows a compositional bias: low complexity. 2 stretches are compositionally biased toward polar residues: residues 113 to 127 (RFSG…SHFT) and 208 to 232 (SSFT…RKDL). The 36-residue stretch at 232–267 (LASSTKQMTIFYGGQAHVFDDVHPNKADVIMALAGS) folds into the Tify domain. Residues 333–361 (GREHQGSIISRGRDIRDPVHRSDPEKEAT) show a composition bias toward basic and acidic residues.

It belongs to the TIFY/JAZ family. As to quaternary structure, interacts with AFPH2/NINJA. In terms of processing, ubiquitinated. Targeted for degradation by the SCF(COI1) E3 ubiquitin ligase-proteasome pathway during jasmonate signaling.

It localises to the nucleus. Repressor of jasmonate responses. The sequence is that of Protein TIFY 8 from Arabidopsis thaliana (Mouse-ear cress).